The primary structure comprises 314 residues: Thymidylate synthase (314 aa).

Residues R21 and 176–177 each bind dUMP; that span reads RR. The active-site Nucleophile is the C196. DUMP is bound by residues 216–219, N227, and 257–259; these read RSAD and HLY. D219 contacts (6R)-5,10-methylene-5,6,7,8-tetrahydrofolate. S313 is a (6R)-5,10-methylene-5,6,7,8-tetrahydrofolate binding site.

The protein belongs to the thymidylate synthase family. Bacterial-type ThyA subfamily. Homodimer.

It localises to the cytoplasm. The enzyme catalyses dUMP + (6R)-5,10-methylene-5,6,7,8-tetrahydrofolate = 7,8-dihydrofolate + dTMP. It functions in the pathway pyrimidine metabolism; dTTP biosynthesis. Its function is as follows. Catalyzes the reductive methylation of 2'-deoxyuridine-5'-monophosphate (dUMP) to 2'-deoxythymidine-5'-monophosphate (dTMP) while utilizing 5,10-methylenetetrahydrofolate (mTHF) as the methyl donor and reductant in the reaction, yielding dihydrofolate (DHF) as a by-product. This enzymatic reaction provides an intracellular de novo source of dTMP, an essential precursor for DNA biosynthesis. This is Thymidylate synthase from Listeria monocytogenes serovar 1/2a (strain ATCC BAA-679 / EGD-e).